The chain runs to 241 residues: Xyloglucan-specific endo-beta-1,4-glucanase 1 (241 aa).

The N-terminal stretch at 1–19 (MKGFFAGVVAAATLAVASA) is a signal peptide. The active site involves Glu136. N-linked (GlcNAc...) asparagine glycans are attached at residues Asn174 and Asn190. Glu222 is a catalytic residue.

This sequence belongs to the glycosyl hydrolase 12 (cellulase H) family. Interacts with host apoplastic glucanase inhibitor GIP1.

It localises to the secreted. The protein localises to the host. It carries out the reaction xyloglucan + H2O = xyloglucan oligosaccharides.. The xyloglucanase activity is inhibited by the binding of the host apoplastic glucanase inhibitor GIP1. Glycoside hydrolase that exhibits xyloglucanase activity. Acts as an important virulence factor during P.sojae infection but also acts as a pathogen-associated molecular pattern (PAMP) in soybean and solanaceous species, where it can trigger defense responses including cell death. XEG1-induced cell death can be suppressed by P.sojae RxLR effectors. The PAMP activity is independent of its xyloglucanase activity. XEG1 induces plant defense responses in a RLP kinase Serk3/Bak1-dependent manner in Nicotiana benthamiana. Moreover, the perception of XEG1 occurs independently of the perception of ethylene-inducing xylanase Eix2 in Tomato. With truncated paralog XLP1, is required to elevate apoplastic sugar during P.sojae infection. The polypeptide is Xyloglucan-specific endo-beta-1,4-glucanase 1 (Phytophthora sojae (strain P6497) (Soybean stem and root rot agent)).